A 216-amino-acid polypeptide reads, in one-letter code: Ceramide-1-phosphate transfer protein (216 aa).

The an N-acylsphingoid base 1-phosphate site is built by Asp56, Lys60, Arg108, Arg112, and His152.

Belongs to the GLTP family.

Its subcellular location is the cytoplasm. The protein resides in the cytosol. It is found in the golgi apparatus. The protein localises to the trans-Golgi network membrane. It localises to the cell membrane. Its subcellular location is the endosome membrane. The protein resides in the nucleus outer membrane. It carries out the reaction N-(hexadecanoyl)-sphing-4-enine-1-phosphate(in) = N-(hexadecanoyl)-sphing-4-enine-1-phosphate(out). The enzyme catalyses N-(9Z-octadecenoyl)-sphing-4-enine-1-phosphate(in) = N-(9Z-octadecenoyl)-sphing-4-enine-1-phosphate(out). Functionally, mediates the intracellular transfer of ceramide-1-phosphate (C1P) between organelle membranes and the cell membrane. Required for normal structure of the Golgi stacks. Can bind phosphoceramides with a variety of aliphatic chains, but has a preference for lipids with saturated C16:0 or monounsaturated C18:1 aliphatic chains, and is inefficient with phosphoceramides containing lignoceryl (C24:0). Plays a role in the regulation of the cellular levels of ceramide-1-phosphate, and thereby contributes to the regulation of phospholipase PLA2G4A activity and the release of arachidonic acid. Has no activity with galactosylceramide, lactosylceramide, sphingomyelin, phosphatidylcholine, phosphatidic acid and ceramide. C1P transfer is stimulated by phosphatidylserine in C1P source vesicles. Regulates autophagy, inflammasome mediated IL1B and IL18 processing, and pyroptosis, but not apoptosis. This chain is Ceramide-1-phosphate transfer protein (Cptp), found in Rattus norvegicus (Rat).